The sequence spans 260 residues: Phosphatidate cytidylyltransferase (260 aa).

Helical transmembrane passes span 9–29, 46–66, 70–90, 102–122, 130–150, 172–192, and 196–216; these read IIAL…LMLF, MIKF…IIML, AGSW…FILL, FMDA…FMYL, LHYI…AYIF, FVGG…FVDF, and LWLL…GDLV.

This sequence belongs to the CDS family.

It is found in the cell membrane. The catalysed reaction is a 1,2-diacyl-sn-glycero-3-phosphate + CTP + H(+) = a CDP-1,2-diacyl-sn-glycerol + diphosphate. Its pathway is phospholipid metabolism; CDP-diacylglycerol biosynthesis; CDP-diacylglycerol from sn-glycerol 3-phosphate: step 3/3. The chain is Phosphatidate cytidylyltransferase (cdsA) from Staphylococcus saprophyticus subsp. saprophyticus (strain ATCC 15305 / DSM 20229 / NCIMB 8711 / NCTC 7292 / S-41).